Here is a 349-residue protein sequence, read N- to C-terminus: Phosphoribosylformylglycinamidine cyclo-ligase (349 aa).

It belongs to the AIR synthase family.

It localises to the cytoplasm. It carries out the reaction 2-formamido-N(1)-(5-O-phospho-beta-D-ribosyl)acetamidine + ATP = 5-amino-1-(5-phospho-beta-D-ribosyl)imidazole + ADP + phosphate + H(+). It functions in the pathway purine metabolism; IMP biosynthesis via de novo pathway; 5-amino-1-(5-phospho-D-ribosyl)imidazole from N(2)-formyl-N(1)-(5-phospho-D-ribosyl)glycinamide: step 2/2. This chain is Phosphoribosylformylglycinamidine cyclo-ligase, found in Bordetella petrii (strain ATCC BAA-461 / DSM 12804 / CCUG 43448).